The following is a 58-amino-acid chain: Ribosome biogenesis protein Nop10 (58 aa).

Belongs to the NOP10 family.

In terms of biological role, involved in ribosome biogenesis; more specifically in 18S rRNA pseudouridylation and in cleavage of pre-rRNA. This chain is Ribosome biogenesis protein Nop10, found in Methanobrevibacter smithii (strain ATCC 35061 / DSM 861 / OCM 144 / PS).